We begin with the raw amino-acid sequence, 316 residues long: MANLKDIRDRIVSVKNTRKITEAMRLVAAAKVRRAQEQVLRSRPFADRLARVLENIQSRMSFEMADAPLLKTSDLKTITLLAVTGDRGLCGGYNSNIIKRTEQRYAELNGQGYKVDLVLIGRKAITYFSNRSSQYTIRATFTGLEQVPTSDDAESITTEVLAEFLSQSTDRIEVIYTKFINLVSCNPVVQTLLPLDPQGIAEADDEIFRLTTKDSRLTVEKGVGPANEQPPLPSDIIFEQSPEQLLNALLPLYLQNQMLRALQESAASELASRMTAMNNASDNAKALAKTLTLDYNKARQAAITQEILEVVGGSCT.

Belongs to the ATPase gamma chain family. F-type ATPases have 2 components, CF(1) - the catalytic core - and CF(0) - the membrane proton channel. CF(1) has five subunits: alpha(3), beta(3), gamma(1), delta(1), epsilon(1). CF(0) has three main subunits: a, b and c.

The protein localises to the cellular thylakoid membrane. In terms of biological role, produces ATP from ADP in the presence of a proton gradient across the membrane. The gamma chain is believed to be important in regulating ATPase activity and the flow of protons through the CF(0) complex. The chain is ATP synthase gamma chain from Prochlorococcus marinus (strain MIT 9313).